We begin with the raw amino-acid sequence, 318 residues long: Putative enoyl-CoA hydratase EchA13 (318 aa).

Residues leucine 90–arginine 110 form a disordered region.

The protein belongs to the enoyl-CoA hydratase/isomerase family.

The chain is Putative enoyl-CoA hydratase EchA13 (echA13) from Mycobacterium tuberculosis (strain ATCC 25618 / H37Rv).